Reading from the N-terminus, the 354-residue chain is S-adenosylmethionine:tRNA ribosyltransferase-isomerase (354 aa).

This sequence belongs to the QueA family. Monomer.

The protein resides in the cytoplasm. The enzyme catalyses 7-aminomethyl-7-carbaguanosine(34) in tRNA + S-adenosyl-L-methionine = epoxyqueuosine(34) in tRNA + adenine + L-methionine + 2 H(+). The protein operates within tRNA modification; tRNA-queuosine biosynthesis. Functionally, transfers and isomerizes the ribose moiety from AdoMet to the 7-aminomethyl group of 7-deazaguanine (preQ1-tRNA) to give epoxyqueuosine (oQ-tRNA). The chain is S-adenosylmethionine:tRNA ribosyltransferase-isomerase from Dichelobacter nodosus (strain VCS1703A).